A 423-amino-acid polypeptide reads, in one-letter code: Histidine--tRNA ligase 2 (423 aa).

This sequence belongs to the class-II aminoacyl-tRNA synthetase family. As to quaternary structure, homodimer.

The protein localises to the cytoplasm. It catalyses the reaction tRNA(His) + L-histidine + ATP = L-histidyl-tRNA(His) + AMP + diphosphate + H(+). This chain is Histidine--tRNA ligase 2, found in Bacillus cereus (strain ATCC 10987 / NRS 248).